Reading from the N-terminus, the 73-residue chain is Probable cytochrome b-c1 complex subunit 8 (73 aa).

Residues 1–42 lie on the Mitochondrial matrix side of the membrane; it reads MGQASKVFGKQITYSVSPFQQKLFVNYFKNAIPHLRRGVKDN. A helical transmembrane segment spans residues 43 to 60; sequence FFCSVPYFAALYITVNWA. Residues 61-73 are Mitochondrial intermembrane-facing; sequence NETYHNEMKDHWY.

Belongs to the UQCRQ/QCR8 family. Component of the ubiquinol-cytochrome c oxidoreductase (cytochrome b-c1 complex, complex III, CIII), a multisubunit enzyme composed of 3 respiratory subunits cytochrome b, cytochrome c1 and Rieske protein, 2 core protein subunits, and additional low-molecular weight protein subunits. The complex exists as an obligatory dimer and forms supercomplexes (SCs) in the inner mitochondrial membrane with cytochrome c oxidase (complex IV, CIV).

The protein resides in the mitochondrion inner membrane. Component of the ubiquinol-cytochrome c oxidoreductase, a multisubunit transmembrane complex that is part of the mitochondrial electron transport chain which drives oxidative phosphorylation. The respiratory chain contains 3 multisubunit complexes succinate dehydrogenase (complex II, CII), ubiquinol-cytochrome c oxidoreductase (cytochrome b-c1 complex, complex III, CIII) and cytochrome c oxidase (complex IV, CIV), that cooperate to transfer electrons derived from NADH and succinate to molecular oxygen, creating an electrochemical gradient over the inner membrane that drives transmembrane transport and the ATP synthase. The cytochrome b-c1 complex catalyzes electron transfer from ubiquinol to cytochrome c, linking this redox reaction to translocation of protons across the mitochondrial inner membrane, with protons being carried across the membrane as hydrogens on the quinol. In the process called Q cycle, 2 protons are consumed from the matrix, 4 protons are released into the intermembrane space and 2 electrons are passed to cytochrome c. This is Probable cytochrome b-c1 complex subunit 8 from Dictyostelium discoideum (Social amoeba).